A 349-amino-acid chain; its full sequence is Small ribosomal subunit biogenesis GTPase RsgA (349 aa).

Basic residues predominate over residues 1 to 11 (MSKKKLSKGQQ). The tract at residues 1–29 (MSKKKLSKGQQRRVSANHQRRLKKTESKV) is disordered. A CP-type G domain is found at 102 to 272 (HSVLTRPDYY…VIDSPGVREF (171 aa)). GTP is bound by residues 158-161 (NKID) and 212-220 (GQSGVGKSS). The Zn(2+) site is built by Cys-296, Cys-301, His-303, and Cys-309.

Belongs to the TRAFAC class YlqF/YawG GTPase family. RsgA subfamily. Monomer. Associates with 30S ribosomal subunit, binds 16S rRNA. Zn(2+) serves as cofactor.

Its subcellular location is the cytoplasm. In terms of biological role, one of several proteins that assist in the late maturation steps of the functional core of the 30S ribosomal subunit. Helps release RbfA from mature subunits. May play a role in the assembly of ribosomal proteins into the subunit. Circularly permuted GTPase that catalyzes slow GTP hydrolysis, GTPase activity is stimulated by the 30S ribosomal subunit. This chain is Small ribosomal subunit biogenesis GTPase RsgA, found in Pectobacterium carotovorum subsp. carotovorum (strain PC1).